A 433-amino-acid chain; its full sequence is 23S rRNA (uracil(1939)-C(5))-methyltransferase RlmD (433 aa).

Positions 10–68 (RTTTRQIITVSVNDLDSFGQGVARHNGKTLFIPGLLSQENAEVTVTEDKKQYARAKVVR) constitute a TRAM domain. [4Fe-4S] cluster contacts are provided by Cys81, Cys87, Cys90, and Cys162. S-adenosyl-L-methionine is bound by residues Gln265, Phe294, Asn299, Glu315, Asn342, and Asp363. The active-site Nucleophile is Cys389.

Belongs to the class I-like SAM-binding methyltransferase superfamily. RNA M5U methyltransferase family. RlmD subfamily.

It carries out the reaction uridine(1939) in 23S rRNA + S-adenosyl-L-methionine = 5-methyluridine(1939) in 23S rRNA + S-adenosyl-L-homocysteine + H(+). Its function is as follows. Catalyzes the formation of 5-methyl-uridine at position 1939 (m5U1939) in 23S rRNA. The protein is 23S rRNA (uracil(1939)-C(5))-methyltransferase RlmD of Shigella dysenteriae serotype 1 (strain Sd197).